A 49-amino-acid polypeptide reads, in one-letter code: Large ribosomal subunit protein bL33 (49 aa).

It belongs to the bacterial ribosomal protein bL33 family.

This chain is Large ribosomal subunit protein bL33, found in Alkaliphilus oremlandii (strain OhILAs) (Clostridium oremlandii (strain OhILAs)).